The following is a 127-amino-acid chain: Small ribosomal subunit protein uS13 (127 aa).

The disordered stretch occupies residues 90–127; the sequence is RRHRQGLPVRGQRTRTNARTRRGRRLTVAGKKKTPAKK. Residues 101-127 show a composition bias toward basic residues; the sequence is QRTRTNARTRRGRRLTVAGKKKTPAKK.

It belongs to the universal ribosomal protein uS13 family. As to quaternary structure, part of the 30S ribosomal subunit. Forms a loose heterodimer with protein S19. Forms two bridges to the 50S subunit in the 70S ribosome.

In terms of biological role, located at the top of the head of the 30S subunit, it contacts several helices of the 16S rRNA. In the 70S ribosome it contacts the 23S rRNA (bridge B1a) and protein L5 of the 50S subunit (bridge B1b), connecting the 2 subunits; these bridges are implicated in subunit movement. Contacts the tRNAs in the A and P-sites. The polypeptide is Small ribosomal subunit protein uS13 (Synechocystis sp. (strain ATCC 27184 / PCC 6803 / Kazusa)).